We begin with the raw amino-acid sequence, 403 residues long: Presqualene diphosphate synthase (403 aa).

3 residues coordinate Mg(2+): Asp-84, Glu-87, and Asp-88.

It belongs to the phytoene/squalene synthase family. Mg(2+) is required as a cofactor.

It carries out the reaction 2 (2E,6E)-farnesyl diphosphate = presqualene diphosphate + diphosphate. Its function is as follows. Catalyzes the biosynthesis of presqualene diphosphate (PSPP). Works in combination with SSL-2 or SSL-3 to produce respectively squalene or botryococcene. In most other species, farnesyl diphosphate (FPP) is converted into squalene in a two-step reaction by a single enzyme. The polypeptide is Presqualene diphosphate synthase (SSL-1) (Botryococcus braunii (Green alga)).